A 243-amino-acid chain; its full sequence is UPF0502 protein H16_B1091 (243 aa).

The disordered stretch occupies residues 1–23; that stretch reads MQSNHDSDASQAGDRPARPALRP.

This sequence belongs to the UPF0502 family.

The polypeptide is UPF0502 protein H16_B1091 (Cupriavidus necator (strain ATCC 17699 / DSM 428 / KCTC 22496 / NCIMB 10442 / H16 / Stanier 337) (Ralstonia eutropha)).